Here is a 576-residue protein sequence, read N- to C-terminus: MMRMFRYTNTLQRTAKISHVLWARNYAKDVRFGPEVRAMMLQGVDVLADAVAVTMGPKGRNVIIEQSWGSPKITKDGVTVAKSIALKDKFQNIGAKLVQDVANNTNEEAGDGTTTATVLARAIAKEGFEKISRGASPVEIRRGVMLAIETVKDNLRRLSRPVNTPEEICQVATISANGDKSVGNLISEAIKKVGRDGVITVKDGKTLCDELEVIEGMKFDRGYISPYFINTSKGAKVEFQDALLLFCEKKIKSAPSIVPALELANAQRKPLVIIAEDLEAEALSTLVVNRLKVGLQVCAVKAPGFGDNRKENLMDMAVATGGIVFGDEANMVRLEDIKMSDFGRVGEVVVSKDDTMLLKGKGQKAEVEKRVEGLREAIKESTSSYEKEKMQERLARLSSGVALLRVGGSSDVEVSEKKDRVIDALNATRAAVEEGIVPGGGTALLRCIQKLNDLKGANEDQNMGIEIIRRALRMPCLTIAKNAGVDGAMVVAKVEILDGDYGYDALKGEYGNMIERGIIDPTKVVRTAISDAAGVASLLTTAEAVVTELPLEEAAAAGAAAGLGALGGMGMGGMGM.

The N-terminal 61 residues, Met-1–Asn-61, are a transit peptide targeting the mitochondrion.

Belongs to the chaperonin (HSP60) family. As to expression, first detectable expression is seen in the posterior part of the dorsal tracheal trunk at stage 14-15, which marks the beginning of terminal tracheation. In the larval gut, expression in proventriculus is stronger than in midgut and hindgut. Malpighian tubules shows low expression and late third instar larval imaginal disks and brain showed moderate expression. In larval ovary and testis, expression is strong in the posterior region.

The protein localises to the mitochondrion matrix. Its function is as follows. Prevents misfolding and promotes the refolding and proper assembly of unfolded polypeptides generated under stress conditions. Essential for proper development of trachea, spermatogonia and spermatocytes. The protein is 60 kDa heat shock protein homolog 2, mitochondrial (Hsp60C) of Drosophila melanogaster (Fruit fly).